A 131-amino-acid chain; its full sequence is Small ribosomal subunit protein uS11 (131 aa).

The protein belongs to the universal ribosomal protein uS11 family. Part of the 30S ribosomal subunit. Interacts with proteins S7 and S18. Binds to IF-3.

Its function is as follows. Located on the platform of the 30S subunit, it bridges several disparate RNA helices of the 16S rRNA. Forms part of the Shine-Dalgarno cleft in the 70S ribosome. In Thermotoga neapolitana (strain ATCC 49049 / DSM 4359 / NBRC 107923 / NS-E), this protein is Small ribosomal subunit protein uS11.